Reading from the N-terminus, the 312-residue chain is tRNA dimethylallyltransferase (312 aa).

10–17 (GPTAVGKT) serves as a coordination point for ATP. 12–17 (TAVGKT) is a substrate binding site. Residues 35–38 (DSMQ) are interaction with substrate tRNA.

Belongs to the IPP transferase family. In terms of assembly, monomer. Mg(2+) is required as a cofactor.

The catalysed reaction is adenosine(37) in tRNA + dimethylallyl diphosphate = N(6)-dimethylallyladenosine(37) in tRNA + diphosphate. Its function is as follows. Catalyzes the transfer of a dimethylallyl group onto the adenine at position 37 in tRNAs that read codons beginning with uridine, leading to the formation of N6-(dimethylallyl)adenosine (i(6)A). The polypeptide is tRNA dimethylallyltransferase (Alkaliphilus metalliredigens (strain QYMF)).